The primary structure comprises 1161 residues: Nardilysin (1161 aa).

The first 18 residues, M1–R18, serve as a signal peptide directing secretion. Disordered regions lie at residues K42–S105 and V130–T218. Residues S85, S91, and S93 each carry the phosphoserine modification. The span at T138–E209 shows a compositional bias: acidic residues. H244 lines the Zn(2+) pocket. E247 acts as the Proton acceptor in catalysis. Zn(2+) is bound by residues H248 and E325.

Belongs to the peptidase M16 family. Interacts with BACE1 and NRG1. It depends on Zn(2+) as a cofactor. Testis, and in a lower level in brain, heart and adrenal glands.

Its subcellular location is the mitochondrion. The protein resides in the cell projection. It is found in the dendrite. It catalyses the reaction Hydrolysis of polypeptides, preferably at -Xaa-|-Arg-Lys-, and less commonly at -Arg-|-Arg-Xaa-, in which Xaa is not Arg or Lys.. In terms of biological role, cleaves peptide substrates on the N-terminus of arginine residues in dibasic pairs. Is a critical activator of BACE1- and ADAM17-mediated pro-neuregulin ectodomain shedding, involved in the positive regulation of axonal maturation and myelination. Required for proper functioning of 2-oxoglutarate dehydrogenase (OGDH). In Rattus norvegicus (Rat), this protein is Nardilysin.